The chain runs to 77 residues: uncharacterized protein (77 aa).

This is an uncharacterized protein from Vaccinia virus (strain Western Reserve) (VACV).